A 203-amino-acid polypeptide reads, in one-letter code: Thymidylate kinase (203 aa).

Gly-10 to Ser-17 is a binding site for ATP.

It belongs to the thymidylate kinase family.

It catalyses the reaction dTMP + ATP = dTDP + ADP. Phosphorylation of dTMP to form dTDP in both de novo and salvage pathways of dTTP synthesis. In Brachyspira hyodysenteriae (strain ATCC 49526 / WA1), this protein is Thymidylate kinase.